The following is a 152-amino-acid chain: Methylglyoxal synthase (152 aa).

The region spanning 6 to 152 (RKISARKSIA…YDGYLAERLA (147 aa)) is the MGS-like domain. Residues H19, K23, 45-48 (TGTT), and 65-66 (SG) contribute to the substrate site. D71 functions as the Proton donor/acceptor in the catalytic mechanism. H98 is a substrate binding site.

Belongs to the methylglyoxal synthase family.

It catalyses the reaction dihydroxyacetone phosphate = methylglyoxal + phosphate. In terms of biological role, catalyzes the formation of methylglyoxal from dihydroxyacetone phosphate. The polypeptide is Methylglyoxal synthase (Actinobacillus pleuropneumoniae serotype 3 (strain JL03)).